Consider the following 225-residue polypeptide: Cytidylate kinase (225 aa).

11–19 is an ATP binding site; the sequence is GPAGAGKGT. Over residues 169-185 the composition is skewed to basic and acidic residues; that stretch reads MDRIKSRIEERDARDQS. The tract at residues 169–195 is disordered; that stretch reads MDRIKSRIEERDARDQSRATAPLAAAP.

Belongs to the cytidylate kinase family. Type 1 subfamily.

Its subcellular location is the cytoplasm. It carries out the reaction CMP + ATP = CDP + ADP. It catalyses the reaction dCMP + ATP = dCDP + ADP. This is Cytidylate kinase from Magnetococcus marinus (strain ATCC BAA-1437 / JCM 17883 / MC-1).